Here is a 372-residue protein sequence, read N- to C-terminus: N-methyl-L-tryptophan oxidase (372 aa).

An FAD-binding site is contributed by 4–34 (DLIIIGSGSVGAAAGYYATRAGLKVLMTDAH). C307 bears the S-8alpha-FAD cysteine mark.

It belongs to the MSOX/MTOX family. MTOX subfamily. In terms of assembly, monomer. It depends on FAD as a cofactor.

It carries out the reaction N(alpha)-methyl-L-tryptophan + O2 + H2O = L-tryptophan + formaldehyde + H2O2. In terms of biological role, catalyzes the oxidative demethylation of N-methyl-L-tryptophan. This Salmonella heidelberg (strain SL476) protein is N-methyl-L-tryptophan oxidase.